Consider the following 62-residue polypeptide: Glucagon (62 aa).

The protein belongs to the glucagon family.

It localises to the secreted. Functionally, promotes hydrolysis of glycogen and lipids, and raises the blood sugar level. In Scyliorhinus canicula (Small-spotted catshark), this protein is Glucagon (gcg).